Reading from the N-terminus, the 94-residue chain is MSMLVVVTENVPPRLRGRLAIWLLEVRAGVYVGDVSAKIREMIWEQIAGLAEEGNVVMAWATNTETGFEFQTFGLNRRTPVDLDGLRLVSFLPV.

This sequence belongs to the CRISPR-associated endoribonuclease Cas2 protein family. E.coli-subtype subfamily. Homodimer. Part of the Cas1-Cas2 complex. Forms a hexamer with 2 Cas1 dimers sandwiching a Cas2 dimer. The DNA lies across a flat surface extending from 1 Cas1 dimer, across the Cas2 dimer and contacting the other Cas1 dimer. Only 1 Cas1 protein from each dimer is catalytic, the other interacts with the Cas2 dimer and possibly target DNA.

Functionally, CRISPR (clustered regularly interspaced short palindromic repeat), is an adaptive immune system that provides protection against mobile genetic elements (viruses, transposable elements and conjugative plasmids). CRISPR clusters contain sequences complementary to antecedent mobile elements and target invading nucleic acids. CRISPR clusters are transcribed and processed into CRISPR RNA (crRNA). The Cas1-Cas2 complex is involved in CRISPR adaptation, the first stage of CRISPR immunity, being required for the addition/removal of CRISPR spacers at the leader end of the CRISPR locus. The Cas1-Cas2 complex introduces staggered nicks into both strands of the CRISPR array near the leader repeat and joins the 5'-ends of the repeat strands with the 3'-ends of the new spacer sequence. Spacer DNA integration requires supercoiled target DNA and 3'-OH ends on the inserted (spacer) DNA and probably initiates with a nucleophilic attack of the C 3'-OH end of the protospacer on the minus strand of the first repeat sequence. Expression of Cas1-Cas2 in a strain lacking both genes permits spacer acquisition. Cas2 not seen to bind DNA alone; the Cas1-Cas2 complex preferentially binds CRISPR-locus DNA. Highest binding is seen to a dual forked DNA complex with 3'-overhangs and a protospacer-adjacent motif-complement specifically positioned. The protospacer DNA lies across a flat surface extending from 1 Cas1 dimer, across the Cas2 dimer and contacting the other Cas1 dimer; the 23 bp-long ds section of the DNA is bracketed by 1 Tyr-22 from each of the Cas1 dimers. Cas1 cuts within the 3'-overhang, to generate a 33-nucleotide DNA that is probably incorporated into the CRISPR leader by a cut-and-paste mechanism. This subunit's probable nuclease activity is not required for spacer acquisition. The chain is CRISPR-associated endoribonuclease Cas2 (ygbF) from Escherichia coli (strain K12).